Here is a 429-residue protein sequence, read N- to C-terminus: MAKIVDIKGREVLDSRGNPTVEADVLLDNGIIGSACAPSGASTGSREALELRDGDKSRYLGKGVLKAVANINGPIRDLLLGKDPADQKALDRAMIELDGTENKAKLGANAILAVSLAAAKAAAQDLDLPLYAHIANLNGTPGQYSMPVPMMNIINGGEHADNNVDIQEFMVQPVGAKTFSDGLRMGTEIFHHLKAVLKARGLNTAVGDEGGFAPNLASNEDALGAIAEAVEKAGYKLGTDVTLALDCAASEFYEDGKYNLSGEGKSFDAEGFADYLKGLTERFPIISIEDGLDESDWAGWKILTDKIGEKVQLVGDDLFVTNTKILKEGIEKGIGNSILIKFNQIGSLTETLEAIQMAKAAGYTAVISHRSGETEDSTIADLAVGTAAGQIKTGSLCRSDRVSKYNQLLRIEEQLGAKAVYRGRAEFRG.

Glutamine 167 contributes to the (2R)-2-phosphoglycerate binding site. Glutamate 209 acts as the Proton donor in catalysis. Residues aspartate 246, glutamate 289, and aspartate 316 each contribute to the Mg(2+) site. The (2R)-2-phosphoglycerate site is built by lysine 341, arginine 370, serine 371, and lysine 392. Lysine 341 serves as the catalytic Proton acceptor.

It belongs to the enolase family. As to quaternary structure, component of the RNA degradosome, a multiprotein complex involved in RNA processing and mRNA degradation. Mg(2+) serves as cofactor.

It is found in the cytoplasm. The protein resides in the secreted. It localises to the cell surface. It catalyses the reaction (2R)-2-phosphoglycerate = phosphoenolpyruvate + H2O. It participates in carbohydrate degradation; glycolysis; pyruvate from D-glyceraldehyde 3-phosphate: step 4/5. In terms of biological role, catalyzes the reversible conversion of 2-phosphoglycerate (2-PG) into phosphoenolpyruvate (PEP). It is essential for the degradation of carbohydrates via glycolysis. This Pseudomonas entomophila (strain L48) protein is Enolase.